The chain runs to 128 residues: Histone H2A type 1-J (128 aa).

The disordered stretch occupies residues 1–22 (MSGRGKQGGKARAKAKTRSSRA). Serine 2 bears the N-acetylserine mark. Residue serine 2 is modified to Phosphoserine; by RPS6KA5. Arginine 4 is subject to Citrulline; alternate. At arginine 4 the chain carries Symmetric dimethylarginine; by PRMT5; alternate. Lysine 6 is subject to N6-(2-hydroxyisobutyryl)lysine. Basic residues predominate over residues 7–19 (QGGKARAKAKTRS). Position 10 is an N6-(2-hydroxyisobutyryl)lysine; alternate (lysine 10). An N6-(beta-hydroxybutyryl)lysine; alternate mark is found at lysine 10 and lysine 14. Lysine 10 is subject to N6-lactoyllysine; alternate. Lysine 10 bears the N6-succinyllysine; alternate mark. Lysine 14 participates in a covalent cross-link: Glycyl lysine isopeptide (Lys-Gly) (interchain with G-Cter in ubiquitin); alternate. A Glycyl lysine isopeptide (Lys-Gly) (interchain with G-Cter in ubiquitin) cross-link involves residue lysine 16. Position 37 is an N6-(2-hydroxyisobutyryl)lysine; alternate (lysine 37). N6-(beta-hydroxybutyryl)lysine; alternate is present on lysine 37. An N6-crotonyllysine; alternate modification is found at lysine 37. An N6-(2-hydroxyisobutyryl)lysine mark is found at lysine 75 and lysine 76. Lysine 96 is modified (N6-(2-hydroxyisobutyryl)lysine; alternate). An N6-(beta-hydroxybutyryl)lysine; alternate modification is found at lysine 96. At lysine 96 the chain carries N6-succinyllysine; alternate. Lysine 96 carries the N6-glutaryllysine; alternate modification. Lysine 100 carries the post-translational modification N6-glutaryllysine. Glutamine 105 carries the N5-methylglutamine modification. Position 119 is an N6-(2-hydroxyisobutyryl)lysine; alternate (lysine 119). Residue lysine 119 is modified to N6-(beta-hydroxybutyryl)lysine; alternate. N6-crotonyllysine; alternate is present on residues lysine 119 and lysine 120. Residues lysine 119 and lysine 120 each carry the N6-glutaryllysine; alternate modification. Lysine 120 participates in a covalent cross-link: Glycyl lysine isopeptide (Lys-Gly) (interchain with G-Cter in ubiquitin); alternate. Threonine 121 bears the Phosphothreonine; by DCAF1 mark. Lysine 126 carries the N6-crotonyllysine; alternate modification. The residue at position 126 (lysine 126) is an N6-glutaryllysine; alternate.

Belongs to the histone H2A family. The nucleosome is a histone octamer containing two molecules each of H2A, H2B, H3 and H4 assembled in one H3-H4 heterotetramer and two H2A-H2B heterodimers. The octamer wraps approximately 147 bp of DNA. Post-translationally, deiminated on Arg-4 in granulocytes upon calcium entry. In terms of processing, monoubiquitination of Lys-120 (H2AK119Ub) by RING1, TRIM37 and RNF2/RING2 complex gives a specific tag for epigenetic transcriptional repression and participates in X chromosome inactivation of female mammals. It is involved in the initiation of both imprinted and random X inactivation. Ubiquitinated H2A is enriched in inactive X chromosome chromatin. Ubiquitination of H2A functions downstream of methylation of 'Lys-27' of histone H3 (H3K27me). H2AK119Ub by RNF2/RING2 can also be induced by ultraviolet and may be involved in DNA repair. Monoubiquitination of Lys-120 (H2AK119Ub) by TRIM37 may promote transformation of cells in a number of breast cancers. Following DNA double-strand breaks (DSBs), it is ubiquitinated through 'Lys-63' linkage of ubiquitin moieties by the E2 ligase UBE2N and the E3 ligases RNF8 and RNF168, leading to the recruitment of repair proteins to sites of DNA damage. Ubiquitination at Lys-14 and Lys-16 (H2AK13Ub and H2AK15Ub, respectively) in response to DNA damage is initiated by RNF168 that mediates monoubiquitination at these 2 sites, and 'Lys-63'-linked ubiquitin are then conjugated to monoubiquitin; RNF8 is able to extend 'Lys-63'-linked ubiquitin chains in vitro. Deubiquitinated by USP51 at Lys-14 and Lys-16 (H2AK13Ub and H2AK15Ub, respectively) after damaged DNA is repaired. H2AK119Ub and ionizing radiation-induced 'Lys-63'-linked ubiquitination (H2AK13Ub and H2AK15Ub) are distinct events. Phosphorylation on Ser-2 (H2AS1ph) is enhanced during mitosis. Phosphorylation on Ser-2 by RPS6KA5/MSK1 directly represses transcription. Acetylation of H3 inhibits Ser-2 phosphorylation by RPS6KA5/MSK1. Phosphorylation at Thr-121 (H2AT120ph) by DCAF1 is present in the regulatory region of many tumor suppresor genes and down-regulates their transcription. Post-translationally, glutamine methylation at Gln-105 (H2AQ104me) by FBL is specifically dedicated to polymerase I. It is present at 35S ribosomal DNA locus and impairs binding of the FACT complex. In terms of processing, symmetric dimethylation on Arg-4 by the PRDM1/PRMT5 complex may play a crucial role in the germ-cell lineage. Crotonylation (Kcr) is specifically present in male germ cells and marks testis-specific genes in post-meiotic cells, including X-linked genes that escape sex chromosome inactivation in haploid cells. Crotonylation marks active promoters and enhancers and confers resistance to transcriptional repressors. It is also associated with post-meiotically activated genes on autosomes. Post-translationally, lactylated in macrophages by EP300/P300 by using lactoyl-CoA directly derived from endogenous or exogenous lactate, leading to stimulates gene transcription.

The protein localises to the nucleus. It is found in the chromosome. Functionally, core component of nucleosome. Nucleosomes wrap and compact DNA into chromatin, limiting DNA accessibility to the cellular machineries which require DNA as a template. Histones thereby play a central role in transcription regulation, DNA repair, DNA replication and chromosomal stability. DNA accessibility is regulated via a complex set of post-translational modifications of histones, also called histone code, and nucleosome remodeling. This chain is Histone H2A type 1-J, found in Homo sapiens (Human).